We begin with the raw amino-acid sequence, 366 residues long: UDP-N-acetylglucosamine--N-acetylmuramyl-(pentapeptide) pyrophosphoryl-undecaprenol N-acetylglucosamine transferase (366 aa).

UDP-N-acetyl-alpha-D-glucosamine is bound by residues 10 to 12 (TGG), N124, R165, S192, I247, and Q292.

The protein belongs to the glycosyltransferase 28 family. MurG subfamily.

The protein resides in the cell inner membrane. The catalysed reaction is di-trans,octa-cis-undecaprenyl diphospho-N-acetyl-alpha-D-muramoyl-L-alanyl-D-glutamyl-meso-2,6-diaminopimeloyl-D-alanyl-D-alanine + UDP-N-acetyl-alpha-D-glucosamine = di-trans,octa-cis-undecaprenyl diphospho-[N-acetyl-alpha-D-glucosaminyl-(1-&gt;4)]-N-acetyl-alpha-D-muramoyl-L-alanyl-D-glutamyl-meso-2,6-diaminopimeloyl-D-alanyl-D-alanine + UDP + H(+). It participates in cell wall biogenesis; peptidoglycan biosynthesis. Functionally, cell wall formation. Catalyzes the transfer of a GlcNAc subunit on undecaprenyl-pyrophosphoryl-MurNAc-pentapeptide (lipid intermediate I) to form undecaprenyl-pyrophosphoryl-MurNAc-(pentapeptide)GlcNAc (lipid intermediate II). The chain is UDP-N-acetylglucosamine--N-acetylmuramyl-(pentapeptide) pyrophosphoryl-undecaprenol N-acetylglucosamine transferase from Geotalea daltonii (strain DSM 22248 / JCM 15807 / FRC-32) (Geobacter daltonii).